Here is a 318-residue protein sequence, read N- to C-terminus: MSVWAIGDLQGCYDITQRLLEKINFDPAQDTLWFCGDLVNRGGQSLETLRLVHSLRAHSVVVLGNHDLSLLAIGARSEEEQRKVNPDLLRIVLAKDRDALLDWLRMQKLAHVDRALGWMMIHAGLAPKWTTQMAEKHAREVEQQLQGGGYRKLLRNMYGDQPGWSPGLIGYDRSRAIINLFTRMRYCTPRGRIATDDKGTPGTQAQGLYPWFEVPGRVERDLKIVCGHWSALGLTITQGVHAIDTGAVWGGKLTALQLDTDELRVVQVPGREVTGPAPVARAPRRPRERLGRQRSRGNRGNAGNTAVPAKPPVDTPQD.

Positions proline 269–aspartate 318 are disordered. Residues alanine 282–glycine 297 show a composition bias toward basic residues. Residues alanine 309–aspartate 318 show a composition bias toward pro residues.

It belongs to the Ap4A hydrolase family.

It catalyses the reaction P(1),P(4)-bis(5'-adenosyl) tetraphosphate + H2O = 2 ADP + 2 H(+). Hydrolyzes diadenosine 5',5'''-P1,P4-tetraphosphate to yield ADP. In Xanthomonas oryzae pv. oryzae (strain MAFF 311018), this protein is Bis(5'-nucleosyl)-tetraphosphatase, symmetrical.